Here is a 65-residue protein sequence, read N- to C-terminus: Large ribosomal subunit protein bL35 (65 aa).

The protein belongs to the bacterial ribosomal protein bL35 family.

The sequence is that of Large ribosomal subunit protein bL35 from Thermotoga neapolitana (strain ATCC 49049 / DSM 4359 / NBRC 107923 / NS-E).